The primary structure comprises 215 residues: Myelin protein zero-like protein 2 (215 aa).

The N-terminal stretch at 1-26 (MYGKSPTRAVLFLLGLQLTALWPTAA) is a signal peptide. Residues 27–141 (VEIYTPRVLE…DGLIGEIQLS (115 aa)) enclose the Ig-like V-type domain. Topologically, residues 27–154 (VEIYTPRVLE…TVRFSEIHFL (128 aa)) are extracellular. Residues asparagine 39 and asparagine 118 are each glycosylated (N-linked (GlcNAc...) asparagine). A disulfide bridge links cysteine 47 with cysteine 123. A helical membrane pass occupies residues 155 to 175 (ALAIGSACALMVIIVIVVVLF). The Cytoplasmic segment spans residues 176–215 (QHFRKKRRAERAHRVVEIKSKEEEKLNQEKKASVSLEYTD).

This sequence belongs to the myelin P0 protein family.

The protein resides in the membrane. Mediates homophilic cell-cell adhesion. This Bos taurus (Bovine) protein is Myelin protein zero-like protein 2 (MPZL2).